Here is a 404-residue protein sequence, read N- to C-terminus: uncharacterized protein (404 aa).

Transmembrane regions (helical) follow at residues 1–21, 32–52, 89–109, 182–202, 261–281, 285–305, 344–364, and 384–404; these read MNVLWGLLGAVAIIAIAFLFS, VIVGLCTQVAFGYIVLKWEAG, AFALSVLPVIIFFSALIAVLY, LFGYALLGIPIEYLLAASFMA, LAFVALIAVVNGILGGAFGLF, GVTLESILGYVFSPIAFLIGV, ATIISFALCGFANFSSIAIML, and KAVLAGTLANLLSAAIAGMFI.

It belongs to the concentrative nucleoside transporter (CNT) (TC 2.A.41) family.

The protein localises to the cell membrane. This is an uncharacterized protein from Bacillus subtilis (strain 168).